We begin with the raw amino-acid sequence, 65 residues long: Small ribosomal subunit protein bS21 (65 aa).

This sequence belongs to the bacterial ribosomal protein bS21 family.

This is Small ribosomal subunit protein bS21 from Trichlorobacter lovleyi (strain ATCC BAA-1151 / DSM 17278 / SZ) (Geobacter lovleyi).